We begin with the raw amino-acid sequence, 269 residues long: Tryptophan synthase alpha chain (269 aa).

Residues Glu49 and Asp60 each act as proton acceptor in the active site.

Belongs to the TrpA family. In terms of assembly, tetramer of two alpha and two beta chains.

The enzyme catalyses (1S,2R)-1-C-(indol-3-yl)glycerol 3-phosphate + L-serine = D-glyceraldehyde 3-phosphate + L-tryptophan + H2O. It participates in amino-acid biosynthesis; L-tryptophan biosynthesis; L-tryptophan from chorismate: step 5/5. Functionally, the alpha subunit is responsible for the aldol cleavage of indoleglycerol phosphate to indole and glyceraldehyde 3-phosphate. The chain is Tryptophan synthase alpha chain from Acidovorax ebreus (strain TPSY) (Diaphorobacter sp. (strain TPSY)).